Consider the following 544-residue polypeptide: Chaperonin GroEL 2 (544 aa).

ATP is bound by residues 29 to 32 (TLGP), 86 to 90 (DGTTT), G413, 479 to 481 (NAA), and D495.

It belongs to the chaperonin (HSP60) family. In terms of assembly, forms a cylinder of 14 subunits composed of two heptameric rings stacked back-to-back. Interacts with the co-chaperonin GroES.

The protein resides in the cytoplasm. It catalyses the reaction ATP + H2O + a folded polypeptide = ADP + phosphate + an unfolded polypeptide.. Its function is as follows. Together with its co-chaperonin GroES, plays an essential role in assisting protein folding. The GroEL-GroES system forms a nano-cage that allows encapsulation of the non-native substrate proteins and provides a physical environment optimized to promote and accelerate protein folding. The sequence is that of Chaperonin GroEL 2 from Trichodesmium erythraeum (strain IMS101).